A 455-amino-acid chain; its full sequence is Retinoic acid receptor beta (455 aa).

The interval 1 to 87 is modulating; the sequence is MTTSGHACPV…PLPPPRVYKP (87 aa). The disordered stretch occupies residues 47 to 78; that stretch reads HPPPSGCSTPSPATIETQSTSSEELVPSPPSP. Residues 53-66 show a composition bias toward polar residues; that stretch reads CSTPSPATIETQST. The residue at position 77 (S77) is a Phosphoserine. NR C4-type zinc fingers lie at residues 88-108 and 124-148; these read CFVCQDKSSGYHYGVSACEGC and CHRDKNCVINKVTRNRCQYCRLQKC. The nuclear receptor DNA-binding region spans 88 to 153; that stretch reads CFVCQDKSSG…RLQKCFEVGM (66 aa). The segment at 154–182 is hinge; it reads SKESVRNDRNKKKKETSKQECTESYEMTA. One can recognise an NR LBD domain in the interval 183-417; sequence ELDDLTEKIR…PLIQEMLENS (235 aa). Residues 415–455 are disordered; sequence ENSEGHEPLTPSSSGNTAEHSPSISPSSVENSGVSQSPLVQ. Polar residues predominate over residues 424-434; that stretch reads TPSSSGNTAEH. The span at 435–455 shows a compositional bias: low complexity; that stretch reads SPSISPSSVENSGVSQSPLVQ.

This sequence belongs to the nuclear hormone receptor family. NR1 subfamily. As to quaternary structure, homodimer. Heterodimer; with a RXR molecule. Binds DNA preferentially as a RAR/RXR heterodimer. Heterodimerizes (via NR LBD) with RXRA. Interacts weakly with NCOR2. In terms of tissue distribution, expressed in aortic endothelial cells (at protein level).

Its subcellular location is the nucleus. The protein localises to the cytoplasm. Functionally, receptor for retinoic acid. Retinoic acid receptors bind as heterodimers to their target response elements in response to their ligands, all-trans or 9-cis retinoic acid, and regulate gene expression in various biological processes. The RXR/RAR heterodimers bind to the retinoic acid response elements (RARE) composed of tandem 5'-AGGTCA-3' sites known as DR1-DR5. In the absence or presence of hormone ligand, acts mainly as an activator of gene expression due to weak binding to corepressors. The RXRA/RARB heterodimer can act as a repressor on the DR1 element and as an activator on the DR5 element. In concert with RARG, required for skeletal growth, matrix homeostasis and growth plate function. The sequence is that of Retinoic acid receptor beta (RARB) from Homo sapiens (Human).